Consider the following 885-residue polypeptide: Chitobiase (885 aa).

Residues 1–27 (MNAFKLSALARLTATMGFLGGMGSAMA) form the signal peptide. 3 cysteine pairs are disulfide-bonded: Cys56/Cys66, Cys400/Cys408, and Cys505/Cys578. Catalysis depends on Glu540, which acts as the Proton donor. The segment at 866–885 (EVQVRSVSPDGKRYSRAEKV) is disordered. Basic and acidic residues predominate over residues 875–885 (DGKRYSRAEKV).

It belongs to the glycosyl hydrolase 20 family. In terms of assembly, monomer.

It localises to the periplasm. The enzyme catalyses Hydrolysis of terminal non-reducing N-acetyl-D-hexosamine residues in N-acetyl-beta-D-hexosaminides.. It participates in glycan degradation; chitin degradation. Functionally, digests the beta-1,4-glycosidic bonds in N-acetylglucosamine (GlcNAc) oligomers (mainly dimers). In Serratia marcescens, this protein is Chitobiase (chb).